The primary structure comprises 798 residues: Cold shock domain-containing protein E1 (798 aa).

N-acetylmethionine is present on Met-1. The CSD 1 domain maps to 26–87 (ETGVIEKLLT…RTGKPIAVKL (62 aa)). Lys-81 carries the N6-acetyllysine modification. Lys-91 participates in a covalent cross-link: Glycyl lysine isopeptide (Lys-Gly) (interchain with G-Cter in SUMO2). Position 123 is a phosphoserine (Ser-123). Positions 136-179 (VFYLTYTPEDVEGNVQLETGDKINFVIDNNKHTGAVSARNIMLL) constitute a CSD 2; truncated domain. The region spanning 186-245 (CQGVVCAMKEAFGFIERGDVVKEIFFHYSEFKGDLETLQPGDDVEFTIKDRNGKEVATDV) is the CSD 3 domain. Ser-276 is modified (phosphoserine). The CSD 4; truncated domain maps to 297 to 337 (LPFGDKDTKSKVTLLEGDHVRFNISTDRRDKLERATNIEVL). CSD domains lie at 349–410 (EMGV…AIRI) and 447–507 (NKGK…ATCV). The residue at position 514 (Ser-514) is a Phosphoserine. The CSD 7 domain maps to 519 to 579 (LLGYVATLKD…KGNKVSAEKV (61 aa)). Position 584 is a phosphoserine (Ser-584). CSD domains are found at residues 610–670 (PTQT…AYNI) and 674–735 (RRAT…ACNV). Positions 748–789 (PRPDRLVNRLKNITLDDASAPRLMVLRQPRGPDNSMGFGAER) constitute an SUZ-C domain. Thr-761 bears the Phosphothreonine mark.

The protein belongs to the UNR family. Component of a multi subunit autoregulatory ribonucleoprotein complex (ARC), at least composed of IGF2BP1, PABPC1 and CSDE1. Interacts with STRAP. Part of a complex associated with the FOS mCRD domain and consisting of PABPC1, PAIP1, HNRPD and SYNCRIP. The interaction with PABPC1 is direct and RNA-independent. Interacts with EIF4ENIF1/4E-T.

Its subcellular location is the cytoplasm. The protein localises to the stress granule. It localises to the P-body. In terms of biological role, RNA-binding protein involved in translationally coupled mRNA turnover. Implicated with other RNA-binding proteins in the cytoplasmic deadenylation/translational and decay interplay of the FOS mRNA mediated by the major coding-region determinant of instability (mCRD) domain. Required for efficient formation of stress granules. Its function is as follows. (Microbial infection) Required for internal initiation of translation of human rhinovirus RNA. The sequence is that of Cold shock domain-containing protein E1 from Homo sapiens (Human).